The following is a 449-amino-acid chain: Interferon-related developmental regulator 1 (449 aa).

Residues 1-10 (MPKNKKRNAP) are compositionally biased toward basic residues. Positions 1 to 41 (MPKNKKRNAPHRGGGGGGGSGAATSAATTGGPHRTVQPFSD) are disordered. Positions 12 to 21 (RGGGGGGGSG) are enriched in gly residues. A compositionally biased stretch (low complexity) spans 22–31 (AATSAATTGG).

This sequence belongs to the IFRD family. In terms of assembly, interacts with PSIP1/LEDGF. In terms of tissue distribution, expressed at high levels in the embryonic brain in the period related to neuroblast proliferation and differentiation.

It is found in the cytoplasm. Its subcellular location is the cell membrane. The protein resides in the nucleus. In terms of biological role, probably participates in neurogenesis. Could play a role in regulating gene activity in the proliferative and/or differentiative pathways induced by NGF. The chain is Interferon-related developmental regulator 1 (Ifrd1) from Rattus norvegicus (Rat).